A 459-amino-acid polypeptide reads, in one-letter code: Glutamyl-tRNA reductase (459 aa).

Substrate-binding positions include Thr-49 to Arg-52, Ser-109, Glu-114 to Gln-116, and Gln-120. The active-site Nucleophile is Cys-50. Gly-189–Gly-194 provides a ligand contact to NADP(+).

The protein belongs to the glutamyl-tRNA reductase family. As to quaternary structure, homodimer.

The catalysed reaction is (S)-4-amino-5-oxopentanoate + tRNA(Glu) + NADP(+) = L-glutamyl-tRNA(Glu) + NADPH + H(+). Its pathway is porphyrin-containing compound metabolism; protoporphyrin-IX biosynthesis; 5-aminolevulinate from L-glutamyl-tRNA(Glu): step 1/2. Functionally, catalyzes the NADPH-dependent reduction of glutamyl-tRNA(Glu) to glutamate 1-semialdehyde (GSA). The protein is Glutamyl-tRNA reductase of Halalkalibacterium halodurans (strain ATCC BAA-125 / DSM 18197 / FERM 7344 / JCM 9153 / C-125) (Bacillus halodurans).